We begin with the raw amino-acid sequence, 81 residues long: Large ribosomal subunit protein uL23 (81 aa).

This sequence belongs to the universal ribosomal protein uL23 family. In terms of assembly, part of the 50S ribosomal subunit. Contacts protein L29.

Functionally, binds to 23S rRNA. One of the proteins that surrounds the polypeptide exit tunnel on the outside of the ribosome. The chain is Large ribosomal subunit protein uL23 from Saccharolobus solfataricus (strain ATCC 35092 / DSM 1617 / JCM 11322 / P2) (Sulfolobus solfataricus).